The sequence spans 390 residues: ATP-sensitive inward rectifier potassium channel 11 (390 aa).

The Cytoplasmic segment spans residues 1–65 (MLSRKGIIPE…LQDVFTTLVD (65 aa)). 2 residues coordinate ATP: N48 and R50. A helical membrane pass occupies residues 66-92 (LKWPHTLLIFTMSFLCSWLLFAMVWWL). Residues 93–116 (IAFAHGDLAPGEGTNVPCVTSIHS) are Extracellular-facing. C110 and C142 form a disulfide bridge. Positions 117 to 133 (FSSAFLFSIEVQVTIGF) form an intramembrane region, discontinuously helical; Pore-forming. K(+)-binding residues include T130 and F133. A Selectivity filter motif is present at residues 130–135 (TIGFGG). The Extracellular portion of the chain corresponds to 134–142 (GGRMVTEEC). A helical transmembrane segment spans residues 143 to 171 (PLAILILIVQNIVGLMINAIMLGCIFMKT). The Cytoplasmic segment spans residues 172–390 (AQAHRRAETL…KFSISPDSLS (219 aa)). Position 176 (R176) interacts with a 1,2-diacyl-sn-glycero-3-phospho-(1D-myo-inositol-4,5-bisphosphate). ATP is bound at residue Y330. Phosphothreonine; by MAPK1 is present on T341. S385 bears the Phosphoserine; by MAPK1 mark.

Belongs to the inward rectifier-type potassium channel (TC 1.A.2.1) family. KCNJ11 subfamily. Homotetramer; the homotetramer binds four ATP molecules (one ATP per subunit). Forms an heterooctamer with ABCC8/SUR1; one KCNJ11 homotetramer interacts with four ABCC8/SUR1 molecules. Interacts with ABCC9/SUR2. Phosphorylation by MAPK1 results in changes in channel gating that destabilize the closed states and reduce the ATP sensitivity.

It is found in the membrane. The enzyme catalyses K(+)(in) = K(+)(out). KATP channels are regulated by cytoplasmic ATP/ADP ratios; ATP inhibits the channel by closing the pore, while ADP activates the channel. Activated by phosphatidylinositol 4,5-biphosphate (PtdIns(4,5)P2). Inward rectifier potassium channel that forms the pore of ATP-sensitive potassium channels (KATP), regulating potassium permeability as a function of cytoplasmic ATP and ADP concentrations in many different cells. Inward rectifier potassium channels are characterized by a greater tendency to allow potassium to flow into the cell rather than out of it. Their voltage dependence is regulated by the concentration of extracellular potassium; as external potassium is raised, the voltage range of the channel opening shifts to more positive voltages. The inward rectification is mainly due to the blockage of outward current by internal magnesium. Can be blocked by extracellular barium. In pancreatic cells, it forms KATP channels with ABCC8/SUR1. Can form cardiac and smooth muscle-type KATP channels with ABCC9. The sequence is that of ATP-sensitive inward rectifier potassium channel 11 (Kcnj11) from Mus musculus (Mouse).